An 845-amino-acid polypeptide reads, in one-letter code: Krueppel homolog 1 (845 aa).

The segment at 141–164 (QKQQQQQQHESITNAAPTAAPSAQ) is disordered. C2H2-type zinc fingers lie at residues 194–216 (FKCDQCGMTFGSKSAHTSHTKSH), 271–293 (YQCNVCQKTFAVPARLIRHYRTH), 299–321 (FECEFCHKLFSVKENLQVHRRIH), 327–349 (YKCDVCGRAFEHSGKLHRHMRIH), 355–377 (HKCSVCEKTFIQSGQLVIHMRTH), 383–407 (YKCPEPGCGKGFTCSKQLKVHSRTH), 413–435 (YHCDICFRDFGYNHVLKLHRVQH), and 441–463 (YKCTICDETFKNKKEMEAHIKGH). Disordered regions lie at residues 469 to 610 (DDEA…VQGQ) and 757 to 845 (GLRS…AKAS). Composition is skewed to low complexity over residues 474-491 (AAAASAAASTSAGSSAGS), 498-508 (SSNSESSNHSP), and 532-559 (ATLSIPTSSPLSPSSLSSTYSPSASSMA). The segment covering 582-591 (SGVSSAQPAH) has biased composition (polar residues). Positions 759-775 (RSSTESPERSSSPESDS) are enriched in low complexity. Residues 796–809 (NKGDDGQVDSEKAS) show a composition bias toward basic and acidic residues. Residues 810–823 (GDGTSAAGGAASVG) are compositionally biased toward low complexity.

This sequence belongs to the krueppel C2H2-type zinc-finger protein family.

Functionally, plays a general role in the hierarchies of gene expression leading to metamorphosis. This Drosophila melanogaster (Fruit fly) protein is Krueppel homolog 1 (Kr-h1).